A 1239-amino-acid polypeptide reads, in one-letter code: Inner tegument protein (1239 aa).

Disordered stretches follow at residues 1–20 (MASAMESDSGGGSGGADAQP), 669–704 (GESPQAVGLRPLNLEGEGKAGDAGADGAEDEEGGGP), 959–980 (RPPPVFTPAPRRLPQGGADTPP), and 1087–1239 (GRNA…AEDE). The segment at 615–1239 (NELPKTRSLA…RPPRPTAEDE (625 aa)) is interaction with large tegument protein. Over residues 1112-1123 (DSSPFSFSSSDF) the composition is skewed to low complexity. The segment covering 1139 to 1148 (VPGGGGGGEG) has biased composition (gly residues). The segment covering 1151 to 1170 (EEERERPSDIDTAARARKVE) has biased composition (basic and acidic residues). The span at 1180-1189 (RTTPSPSRRA) shows a compositional bias: low complexity. A compositionally biased stretch (basic residues) spans 1219 to 1232 (VRPRTRRGATRRPP).

Belongs to the herpesviridae inner tegument protein family. In terms of assembly, interacts (via C-terminus) with the large tegument protein/LTP (via N-terminus).

It localises to the virion tegument. It is found in the host cytoplasm. The protein resides in the host nucleus. Its subcellular location is the host Golgi apparatus. The protein localises to the host trans-Golgi network. Plays an essential role in cytoplasmic secondary envelopment during viral egress. Interacts with the capsid via the large tegument protein/LTP and participates in its transport to the host trans-Golgi network (TGN) where secondary envelopment occurs. Modulates tegumentation and capsid accumulation at the viral assembly complex. This is Inner tegument protein from Homo sapiens (Human).